A 309-amino-acid chain; its full sequence is Cell division protein FtsQ (309 aa).

Over 1 to 52 (MLALRGRRGKRVRYPADGVAEADEAFVLPRPLRRGVRFLISLGAGRIRFPNH) the chain is Cytoplasmic. A helical membrane pass occupies residues 53 to 74 (TGTVAAAAFMVATGLYGMSLGG). The Periplasmic segment spans residues 75 to 309 (HTQSFAQVST…KMLKAQEKRI (235 aa)). The POTRA domain maps to 89 to 157 (FAIEDVRVSG…GTIEVVLKER (69 aa)).

This sequence belongs to the FtsQ/DivIB family. FtsQ subfamily.

It is found in the cell inner membrane. Essential cell division protein. This is Cell division protein FtsQ from Rhizobium meliloti (strain 1021) (Ensifer meliloti).